Consider the following 420-residue polypeptide: Deoxyribodipyrimidine photo-lyase (420 aa).

One can recognise a Photolyase/cryptochrome alpha/beta domain in the interval 2–124 (GPLLVWHRGD…PLHLLPAPHL (123 aa)). The tract at residues 152 to 175 (APEALPKGPEEGEIPREDPGLPLP) is disordered. Residues 159-170 (GPEEGEIPREDP) show a composition bias toward basic and acidic residues. FAD is bound at residue tyrosine 197. Residue arginine 201 participates in DNA binding. 209 to 213 (GSRLS) contributes to the FAD binding site. Interaction with DNA stretches follow at residues 244–251 (ELLWRDFS) and 310–311 (NR). 341–343 (DGD) contributes to the FAD binding site. Glutamine 373 serves as a coordination point for DNA.

Belongs to the DNA photolyase class-1 family. In terms of assembly, monomer. It depends on FAD as a cofactor.

It catalyses the reaction cyclobutadipyrimidine (in DNA) = 2 pyrimidine residues (in DNA).. Functionally, involved in repair of UV radiation-induced DNA damage. Catalyzes the light-dependent monomerization (300-600 nm) of cyclobutyl pyrimidine dimers (in cis-syn configuration), which are formed between adjacent bases on the same DNA strand upon exposure to ultraviolet radiation. The protein is Deoxyribodipyrimidine photo-lyase (phr) of Thermus thermophilus (strain ATCC BAA-163 / DSM 7039 / HB27).